Reading from the N-terminus, the 1819-residue chain is U3 small nucleolar RNA-associated protein 10 (1819 aa).

An HEAT 1 repeat occupies 583 to 620 (LDFQAILPFLLVALADPSERIRREAAAALAAIGGIYKK). 2 helical membrane-spanning segments follow: residues 945–965 (IQSG…AIVN) and 1001–1021 (ALLL…HSVM). HEAT repeat units lie at residues 1045–1082 (QTID…AFEH), 1269–1306 (LTLV…QNPE), 1313–1351 (IRVL…KYGK), and 1775–1812 (ALLP…VLGE).

It belongs to the HEATR1/UTP10 family. Component of the ribosomal small subunit (SSU) processome.

The protein localises to the nucleus. It is found in the nucleolus. The protein resides in the membrane. Involved in nucleolar processing of pre-18S ribosomal RNA. Involved in ribosome biosynthesis. The sequence is that of U3 small nucleolar RNA-associated protein 10 from Aspergillus clavatus (strain ATCC 1007 / CBS 513.65 / DSM 816 / NCTC 3887 / NRRL 1 / QM 1276 / 107).